The following is a 137-amino-acid chain: Small ribosomal subunit protein uS13 (137 aa).

The segment at V114–K137 is disordered. Basic residues predominate over residues A119–M130.

Belongs to the universal ribosomal protein uS13 family. Part of the 30S ribosomal subunit. Forms a loose heterodimer with protein S19. Forms two bridges to the 50S subunit in the 70S ribosome.

Its function is as follows. Located at the top of the head of the 30S subunit, it contacts several helices of the 16S rRNA. In the 70S ribosome it contacts the 23S rRNA (bridge B1a) and protein L5 of the 50S subunit (bridge B1b), connecting the 2 subunits; these bridges are implicated in subunit movement. Contacts the tRNAs in the A and P-sites. This chain is Small ribosomal subunit protein uS13, found in Mesomycoplasma hyopneumoniae (strain 232) (Mycoplasma hyopneumoniae).